Reading from the N-terminus, the 464-residue chain is Glycine receptor subunit alpha-3 (464 aa).

A signal peptide spans 1–33 (MAHVRHFRTLVSGFYFWEAALLLSLVATKETNS). Topologically, residues 34-255 (ARSRSAPMSP…RFHLERQMGY (222 aa)) are extracellular. Asn71 is a glycosylation site (N-linked (GlcNAc...) asparagine). Cys171 and Cys185 are disulfide-bonded. Glu225 and Asp227 together coordinate Zn(2+). Residues Cys231 and Cys242 are joined by a disulfide bond. Residue 235 to 240 (YNTGKF) participates in strychnine binding. His248 lines the Zn(2+) pocket. Residues 256 to 277 (YLIQMYIPSLLIVILSWVSFWI) form a helical membrane-spanning segment. Topologically, residues 278–282 (NMDAA) are cytoplasmic. The chain crosses the membrane as a helical span at residues 283–303 (PARVALGITTVLTMTTQSSGS). Over 304–314 (RASLPKVSYVK) the chain is Extracellular. The chain crosses the membrane as a helical span at residues 315–335 (AIDIWMAVCLLFVFSALLEYA). At 336 to 430 (AVNFVSRQHK…FIDRAKKIDT (95 aa)) the chain is on the cytoplasmic side. Ser370 is subject to Phosphoserine. A Phosphoserine; by PKA modification is found at Ser379. The helical transmembrane segment at 431–451 (ISRACFPLAFLIFNIFYWVIY) threads the bilayer. Topologically, residues 452-464 (KILRHEDIHQQQD) are extracellular.

Belongs to the ligand-gated ion channel (TC 1.A.9) family. Glycine receptor (TC 1.A.9.3) subfamily. GLRA3 sub-subfamily. As to quaternary structure, homopentamer (in vitro). Heteropentamer composed of GLRA3 and GLRB. Both homopentamers and heteropentamers form functional ion channels, but their characteristics are subtly different. Phosphorylated by PKA; this causes down-regulation of channel activity. Dephosphorylated in response to activation of HTR1A signaling; this increases channel activity. In terms of tissue distribution, detected in brainstem, also in neurons that control rhythmic breathing. Detected in superficial laminae of the dorsal horn of the thoracic spinal cord. Detected in dentate gyrus in hippocampus, especially in stratum granulare. Detected in the inner plexiform layer in the retina (at protein level). Detected in midbrain, thalamus, brain cortex, hippocampus, and at lower levels in cerebellum.

Its subcellular location is the postsynaptic cell membrane. It localises to the synapse. It is found in the perikaryon. The protein localises to the cell projection. The protein resides in the dendrite. Its subcellular location is the cell membrane. The enzyme catalyses chloride(in) = chloride(out). Its activity is regulated as follows. Inhibited by prostaglandin E2, probably via PKA-mediated phosphorylation at Ser-379. Glycine receptors are ligand-gated chloride channels. Channel opening is triggered by extracellular glycine. Channel characteristics depend on the subunit composition; heteropentameric channels display faster channel closure. Plays an important role in the down-regulation of neuronal excitability. Contributes to the generation of inhibitory postsynaptic currents. Contributes to increased pain perception in response to increased prostaglandin E2 levels. Plays a role in the regulation of breathing rhythm, especially of the duration of the postinspiratory phase. Plays a role in cellular responses to ethanol. This is Glycine receptor subunit alpha-3 (Glra3) from Mus musculus (Mouse).